The sequence spans 445 residues: N-succinylarginine dihydrolase (445 aa).

Residues 19-28, Asn110, and 137-138 contribute to the substrate site; these read AGLSFGNVAS and HR. The active site involves Glu174. Residue Arg214 coordinates substrate. His250 is a catalytic residue. Residues Asp252 and Asn363 each contribute to the substrate site. The Nucleophile role is filled by Cys369.

It belongs to the succinylarginine dihydrolase family. Homodimer.

It carries out the reaction N(2)-succinyl-L-arginine + 2 H2O + 2 H(+) = N(2)-succinyl-L-ornithine + 2 NH4(+) + CO2. Its pathway is amino-acid degradation; L-arginine degradation via AST pathway; L-glutamate and succinate from L-arginine: step 2/5. Functionally, catalyzes the hydrolysis of N(2)-succinylarginine into N(2)-succinylornithine, ammonia and CO(2). The protein is N-succinylarginine dihydrolase of Shewanella woodyi (strain ATCC 51908 / MS32).